The chain runs to 290 residues: Bifunctional protein FolD (290 aa).

NADP(+)-binding positions include 167-169 (GRS), serine 192, and isoleucine 233.

The protein belongs to the tetrahydrofolate dehydrogenase/cyclohydrolase family. In terms of assembly, homodimer.

It carries out the reaction (6R)-5,10-methylene-5,6,7,8-tetrahydrofolate + NADP(+) = (6R)-5,10-methenyltetrahydrofolate + NADPH. It catalyses the reaction (6R)-5,10-methenyltetrahydrofolate + H2O = (6R)-10-formyltetrahydrofolate + H(+). The protein operates within one-carbon metabolism; tetrahydrofolate interconversion. Catalyzes the oxidation of 5,10-methylenetetrahydrofolate to 5,10-methenyltetrahydrofolate and then the hydrolysis of 5,10-methenyltetrahydrofolate to 10-formyltetrahydrofolate. This chain is Bifunctional protein FolD, found in Azorhizobium caulinodans (strain ATCC 43989 / DSM 5975 / JCM 20966 / LMG 6465 / NBRC 14845 / NCIMB 13405 / ORS 571).